A 272-amino-acid chain; its full sequence is MDNLIKDMRENLNSYSFKVVSDLVKELDVNRDNKAQIKELADLLKEDKRKNVSSLGNRLEKNLNNLIKEEERVKNMYLFDKSFGDYKYVAGVDEVGRGPLAGPIVSAAVILDSSDLDDIILYINDSKKLSEHKREELSEIIKEKALSYSISMCDSKEIDEKGIGYCNNHVFIKACEGLSIKPDLVLSDGYLIKNFNGENKHVIKGDTKSACIACASIIAKVYRDNIMKEYHKKYPQYDFEKNVGYGTKTHVDALKEVGPTEIHRMSFLKNIL.

Positions 87–272 (KYVAGVDEVG…HRMSFLKNIL (186 aa)) constitute an RNase H type-2 domain. Positions 93, 94, and 188 each coordinate a divalent metal cation.

This sequence belongs to the RNase HII family. The cofactor is Mn(2+). Mg(2+) serves as cofactor.

It is found in the cytoplasm. It catalyses the reaction Endonucleolytic cleavage to 5'-phosphomonoester.. Functionally, endonuclease that specifically degrades the RNA of RNA-DNA hybrids. The protein is Ribonuclease HII of Clostridium perfringens (strain ATCC 13124 / DSM 756 / JCM 1290 / NCIMB 6125 / NCTC 8237 / Type A).